The chain runs to 345 residues: Probable 1-aminocyclopropane-1-carboxylate deaminase (345 aa).

Residue Lys58 is modified to N6-(pyridoxal phosphate)lysine. The active-site Nucleophile is Ser85.

This sequence belongs to the ACC deaminase/D-cysteine desulfhydrase family. Pyridoxal 5'-phosphate serves as cofactor.

It carries out the reaction 1-aminocyclopropane-1-carboxylate + H2O = 2-oxobutanoate + NH4(+). Catalyzes a cyclopropane ring-opening reaction, the irreversible conversion of 1-aminocyclopropane-1-carboxylate (ACC) to ammonia and alpha-ketobutyrate. This Cryptococcus neoformans var. neoformans serotype D (strain JEC21 / ATCC MYA-565) (Filobasidiella neoformans) protein is Probable 1-aminocyclopropane-1-carboxylate deaminase.